Consider the following 121-residue polypeptide: Large ribosomal subunit protein uL24 (121 aa).

The protein belongs to the universal ribosomal protein uL24 family. As to quaternary structure, part of the 50S ribosomal subunit.

Functionally, one of two assembly initiator proteins, it binds directly to the 5'-end of the 23S rRNA, where it nucleates assembly of the 50S subunit. Located at the polypeptide exit tunnel on the outside of the subunit. This is Large ribosomal subunit protein uL24 from Pyrococcus furiosus (strain ATCC 43587 / DSM 3638 / JCM 8422 / Vc1).